A 424-amino-acid chain; its full sequence is Serine--tRNA ligase (424 aa).

An L-serine-binding site is contributed by 230–232; that stretch reads TAE. 261–263 contributes to the ATP binding site; that stretch reads RSE. L-serine is bound at residue Glu-284. 348–351 is a binding site for ATP; sequence EISS. L-serine is bound at residue Ser-384.

The protein belongs to the class-II aminoacyl-tRNA synthetase family. Type-1 seryl-tRNA synthetase subfamily. Homodimer. The tRNA molecule binds across the dimer.

The protein resides in the cytoplasm. The enzyme catalyses tRNA(Ser) + L-serine + ATP = L-seryl-tRNA(Ser) + AMP + diphosphate + H(+). The catalysed reaction is tRNA(Sec) + L-serine + ATP = L-seryl-tRNA(Sec) + AMP + diphosphate + H(+). It functions in the pathway aminoacyl-tRNA biosynthesis; selenocysteinyl-tRNA(Sec) biosynthesis; L-seryl-tRNA(Sec) from L-serine and tRNA(Sec): step 1/1. In terms of biological role, catalyzes the attachment of serine to tRNA(Ser). Is also able to aminoacylate tRNA(Sec) with serine, to form the misacylated tRNA L-seryl-tRNA(Sec), which will be further converted into selenocysteinyl-tRNA(Sec). The sequence is that of Serine--tRNA ligase from Streptococcus pneumoniae (strain JJA).